The sequence spans 782 residues: Transcription factor SOX-30 (782 aa).

Disordered regions lie at residues 1 to 37 (MERARPEPPPPPPPPPRQPPRPTPPRPLRPAPPAQPV), 95 to 117 (LPPGGPGVPPAPDEGAAAAAAAA), and 139 to 226 (PPQS…DALK). Pro residues-rich tracts occupy residues 7-35 (EPPPPPPPPPRQPPRPTPPRPLRPAPPAQ) and 97-106 (PGGPGVPPAP). Residues 203–226 (LDGRRSDEKKAKLEAEEAPRDALK) show a composition bias toward basic and acidic residues. The segment at residues 366-434 (VKRPMNAFMV…KHREEFPGWV (69 aa)) is a DNA-binding region (HMG box). Disordered regions lie at residues 501–604 (PTPA…STCP), 704–724 (YPDEHTHSEDSRSCESMDGPP), and 756–782 (ASAPSGVQQVNVTDSDEEEEEKVLRNL). Polar residues predominate over residues 512 to 522 (TLFQPSVSSTG). Pro residues predominate over residues 525-538 (AVPPPSLTPRPSLP). Positions 555–574 (SGSSRSVKRSTPGSLESTTR) are enriched in polar residues. Positions 704 to 718 (YPDEHTHSEDSRSCE) are enriched in basic and acidic residues.

In terms of assembly, interacts with CTNNB1, competitively inhibiting CTNNB1-TCF7L2/TCF4 interaction. Expressed in the lung (at protein level). Expressed in testes (at protein level). Expressed in preleptotene spermatocytes, round spermatids, and elongated spermatids in the testis (at protein level). Expressed in pachytene spermatocytes during stages 3 to 8 of spermatogenesis (at protein level). Increased expression in diplotene spermatocytes at stage 9-11 and in metaphase spermatocytes or secondary spermatocytes at stage 12. Expressed in ovaries.

It localises to the nucleus. The protein resides in the cytoplasm. In terms of biological role, acts both as a transcriptional activator and a repressor. Binds to the DNA sequence 5'-ACAAT-3' and shows a preference for guanine residues surrounding this core motif. Binds to its own promoter and activates its own transcription. Required to activate the expression of postmeiotic genes involved in spermiogenesis. Binds to the promoter region of CTNNB1 and represses its transcription which leads to inhibition of Wnt signaling. Also inhibits Wnt signaling by binding to the CTNNB1 protein, preventing interaction of CTNNB1 with TCF7L2/TCF4. This is Transcription factor SOX-30 (Sox30) from Mus musculus (Mouse).